Reading from the N-terminus, the 187-residue chain is Elongation factor P (187 aa).

This sequence belongs to the elongation factor P family.

The protein resides in the cytoplasm. Its pathway is protein biosynthesis; polypeptide chain elongation. Involved in peptide bond synthesis. Stimulates efficient translation and peptide-bond synthesis on native or reconstituted 70S ribosomes in vitro. Probably functions indirectly by altering the affinity of the ribosome for aminoacyl-tRNA, thus increasing their reactivity as acceptors for peptidyl transferase. This is Elongation factor P from Roseobacter denitrificans (strain ATCC 33942 / OCh 114) (Erythrobacter sp. (strain OCh 114)).